We begin with the raw amino-acid sequence, 135 residues long: MARSRFDTGSGPSQRQLRVGELIRRTLSSVLNQGDIHDPDLNRMSITVGEVRTSPDLKVATAYVLPLGGHGAQDALDALRRNRHELRRAVSKELTLKFSPELRFQIDETFDRMDETRRLLSQDHVRQDLDKPDED.

This sequence belongs to the RbfA family. In terms of assembly, monomer. Binds 30S ribosomal subunits, but not 50S ribosomal subunits or 70S ribosomes.

The protein localises to the cytoplasm. One of several proteins that assist in the late maturation steps of the functional core of the 30S ribosomal subunit. Associates with free 30S ribosomal subunits (but not with 30S subunits that are part of 70S ribosomes or polysomes). Required for efficient processing of 16S rRNA. May interact with the 5'-terminal helix region of 16S rRNA. The polypeptide is Ribosome-binding factor A (Dinoroseobacter shibae (strain DSM 16493 / NCIMB 14021 / DFL 12)).